The sequence spans 99 residues: MAKVNIKPLEDKLLVQIVEAETTTASGLVIPDTAKEKPQEATVVAVGPGRTDENGKRVPMDVAEGDVVIFSKYGGTEIKYAGEEYLILSQRDVLAVVEK.

It belongs to the GroES chaperonin family. Heptamer of 7 subunits arranged in a ring. Interacts with the chaperonin GroEL.

It is found in the cytoplasm. Together with the chaperonin GroEL, plays an essential role in assisting protein folding. The GroEL-GroES system forms a nano-cage that allows encapsulation of the non-native substrate proteins and provides a physical environment optimized to promote and accelerate protein folding. GroES binds to the apical surface of the GroEL ring, thereby capping the opening of the GroEL channel. In Corynebacterium kroppenstedtii (strain DSM 44385 / JCM 11950 / CIP 105744 / CCUG 35717), this protein is Co-chaperonin GroES.